Consider the following 304-residue polypeptide: Quinolinate synthase (304 aa).

Positions 24 and 41 each coordinate iminosuccinate. Cys-86 lines the [4Fe-4S] cluster pocket. Iminosuccinate-binding positions include 112 to 114 (YVN) and Ser-129. Cys-171 is a [4Fe-4S] cluster binding site. Iminosuccinate-binding positions include 197-199 (HPE) and Thr-214. Residue Cys-259 participates in [4Fe-4S] cluster binding.

The protein belongs to the quinolinate synthase family. Type 2 subfamily. [4Fe-4S] cluster is required as a cofactor.

The protein localises to the cytoplasm. It carries out the reaction iminosuccinate + dihydroxyacetone phosphate = quinolinate + phosphate + 2 H2O + H(+). The protein operates within cofactor biosynthesis; NAD(+) biosynthesis; quinolinate from iminoaspartate: step 1/1. Catalyzes the condensation of iminoaspartate with dihydroxyacetone phosphate to form quinolinate. The sequence is that of Quinolinate synthase from Geobacter metallireducens (strain ATCC 53774 / DSM 7210 / GS-15).